The following is a 200-amino-acid chain: MPIGTPSVPYRLPGSQMERWVDIYTRLGVERILFLGQEVSDGVANSLVAQMLYLDSEDSTKPIYLYINSPGGSVTAGLAIYDTMKYVKSDVVTICVGLAASMGAFLLTAGTKGKRLALPHSRIMIHQPLGGTNQRQASDIEIEAREILRIKDMLNHSMAELTGQSFEKIEKDTDRDYFLSAAEAKDYGLIDRVIAHPNEA.

S101 (nucleophile) is an active-site residue. H126 is a catalytic residue.

The protein belongs to the peptidase S14 family. Fourteen ClpP subunits assemble into 2 heptameric rings which stack back to back to give a disk-like structure with a central cavity, resembling the structure of eukaryotic proteasomes.

Its subcellular location is the cytoplasm. It catalyses the reaction Hydrolysis of proteins to small peptides in the presence of ATP and magnesium. alpha-casein is the usual test substrate. In the absence of ATP, only oligopeptides shorter than five residues are hydrolyzed (such as succinyl-Leu-Tyr-|-NHMec, and Leu-Tyr-Leu-|-Tyr-Trp, in which cleavage of the -Tyr-|-Leu- and -Tyr-|-Trp bonds also occurs).. Its function is as follows. Cleaves peptides in various proteins in a process that requires ATP hydrolysis. Has a chymotrypsin-like activity. Plays a major role in the degradation of misfolded proteins. The chain is ATP-dependent Clp protease proteolytic subunit 2 from Prochlorococcus marinus (strain MIT 9313).